A 311-amino-acid chain; its full sequence is Olfactory receptor 14I1 (311 aa).

Over 1–26 (MDNLTKVTEFLLMEFSGIWELQVLHA) the chain is Extracellular. Asn-3 carries an N-linked (GlcNAc...) asparagine glycan. The chain crosses the membrane as a helical span at residues 27-47 (GLFLLIYLAVLVGNLLIIAVI). The Cytoplasmic segment spans residues 48-55 (TLDQHLHT). Residues 56-76 (PMYFFLKNLSVLDLCYISVTV) traverse the membrane as a helical segment. Residues 77-92 (PKSIRNSLTRRSSISY) are Extracellular-facing. The helical transmembrane segment at 93–113 (LGCVAQVYFFSAFASAELAFL) threads the bilayer. Cys-95 and Cys-188 are oxidised to a cystine. The Cytoplasmic segment spans residues 114–141 (TVMSYDRYVAICHPLQYRAVMTSGGCYQ). A helical transmembrane segment spans residues 142 to 162 (MAVTTWLSCFSYAAVHTGNMF). The Extracellular portion of the chain corresponds to 163-189 (REHVCRSSVIHQFFRDIPHVLALVSCE). Residues 190-210 (VFFVEFLTLALSSCLVLGCFI) form a helical membrane-spanning segment. The Cytoplasmic segment spans residues 211-241 (LMMISYFQIFSTVLRIPSGQSRAKAFSTCSP). The chain crosses the membrane as a helical span at residues 242-262 (QLIVIMLFLTTGLFAALGPIA). Residues 263–269 (KALSIQD) lie on the Extracellular side of the membrane. The chain crosses the membrane as a helical span at residues 270-290 (LVIALTYTVLPPFLNPIIYSL). The Cytoplasmic portion of the chain corresponds to 291-311 (RNKEIKTAMWRLFVKIYFLQK).

The protein belongs to the G-protein coupled receptor 1 family.

It is found in the cell membrane. Odorant receptor. The sequence is that of Olfactory receptor 14I1 (OR14I1) from Homo sapiens (Human).